We begin with the raw amino-acid sequence, 397 residues long: GTPase Obg (397 aa).

Residues 1 to 159 form the Obg domain; sequence MKFVDEATII…RNLRLELKVL (159 aa). The interval 128–148 is disordered; it reads TRFKSSVNRAPRQTSKGSEGE. The segment covering 129–144 has biased composition (polar residues); it reads RFKSSVNRAPRQTSKG. One can recognise an OBG-type G domain in the interval 160–333; that stretch reads ADVGLLGLPN…LVQAVMRWIE (174 aa). GTP contacts are provided by residues 166 to 173, 191 to 195, 213 to 216, 283 to 286, and 314 to 316; these read GLPNAGKS, FTTLV, DIPG, NKVD, and SAL. Mg(2+) is bound by residues Ser-173 and Thr-193. Acidic residues predominate over residues 336–347; sequence AEQEADNPDFAE. A disordered region spans residues 336–397; it reads AEQEADNPDF…YDVEVVYAPE (62 aa). The span at 349–370 shows a compositional bias: basic and acidic residues; the sequence is EAARRRRMDEEARQKIEADRQA. Over residues 378 to 390 the composition is skewed to acidic residues; that stretch reads DDDDDFDDDDYDV.

Belongs to the TRAFAC class OBG-HflX-like GTPase superfamily. OBG GTPase family. In terms of assembly, monomer. Mg(2+) serves as cofactor.

The protein resides in the cytoplasm. Its function is as follows. An essential GTPase which binds GTP, GDP and possibly (p)ppGpp with moderate affinity, with high nucleotide exchange rates and a fairly low GTP hydrolysis rate. Plays a role in control of the cell cycle, stress response, ribosome biogenesis and in those bacteria that undergo differentiation, in morphogenesis control. The polypeptide is GTPase Obg (Marinobacter nauticus (strain ATCC 700491 / DSM 11845 / VT8) (Marinobacter aquaeolei)).